Consider the following 257-residue polypeptide: Uxu operon transcriptional regulator (257 aa).

Positions 8 to 76 (QRPYQEVGAM…RGAGIYVLDN (69 aa)) constitute an HTH gntR-type domain. Positions 36-55 (EREIAEMLDVTRTVVREALI) form a DNA-binding region, H-T-H motif.

Functionally, repressor for the uxuRBA operon. The chain is Uxu operon transcriptional regulator (uxuR) from Escherichia coli (strain K12).